The primary structure comprises 589 residues: 3-hydroxy-3-methylglutaryl coenzyme A reductase 2-B (589 aa).

Residues 1–35 (MDVRRRPVTKTLTAGEPLKSQNQHSSSLKASDALP) are Lumenal-facing. Residues 36–56 (LPLYLTNGLFFTMFFSVMYFL) form a helical membrane-spanning segment. Residues 57-79 (LHRWREKIRNSVPLHVVTLSELA) are Cytoplasmic-facing. The helical transmembrane segment at 80 to 100 (ALVLLVASVIYLLGFFGIGFV) threads the bilayer. Residues 101–544 (QSLIRPSPDS…SKESPGPNSR (444 aa)) lie on the Lumenal side of the membrane. N-linked (GlcNAc...) asparagine glycosylation is present at Asn-256. The Charge relay system role is filled by Glu-268. The N-linked (GlcNAc...) asparagine glycan is linked to Asn-332. Residues Lys-400 and Asp-476 each act as charge relay system in the active site. Residues 545 to 565 (LLASIVAGSVLAGELSLMSAL) traverse the membrane as a helical segment. The Cytoplasmic segment spans residues 566–589 (AAGQLVKSHMKFNRSSKDVSKLSS). His-574 acts as the Proton donor in catalysis.

Belongs to the HMG-CoA reductase family.

The protein localises to the endoplasmic reticulum membrane. It catalyses the reaction (R)-mevalonate + 2 NADP(+) + CoA = (3S)-3-hydroxy-3-methylglutaryl-CoA + 2 NADPH + 2 H(+). The protein operates within metabolic intermediate biosynthesis; (R)-mevalonate biosynthesis; (R)-mevalonate from acetyl-CoA: step 3/3. Functionally, catalyzes the synthesis of mevalonate, the specific precursor of all isoprenoid compounds present in plants. Component of the triterpene saponins (e.g. ginsenosides or panaxosides) and phytosterols biosynthetic pathways. Promotes triterpenes accumulation in roots. This chain is 3-hydroxy-3-methylglutaryl coenzyme A reductase 2-B, found in Panax ginseng (Korean ginseng).